A 365-amino-acid chain; its full sequence is Chaperone protein DnaJ (365 aa).

One can recognise a J domain in the interval 4 to 70 (DYYKILGVDR…EKRRIYDQTG (67 aa)). The CR-type zinc-finger motif lies at 139–220 (GTEKRIKFRR…CNGTGTIVVD (82 aa)). Residues cysteine 152, cysteine 155, cysteine 168, cysteine 171, cysteine 194, cysteine 197, cysteine 208, and cysteine 211 each contribute to the Zn(2+) site. CXXCXGXG motif repeat units follow at residues 152–159 (CPDCKGTG), 168–175 (CPTCHGTG), 194–201 (CNTCGGKG), and 208–215 (CPRCNGTG).

The protein belongs to the DnaJ family. In terms of assembly, homodimer. Zn(2+) is required as a cofactor.

It is found in the cytoplasm. Participates actively in the response to hyperosmotic and heat shock by preventing the aggregation of stress-denatured proteins and by disaggregating proteins, also in an autonomous, DnaK-independent fashion. Unfolded proteins bind initially to DnaJ; upon interaction with the DnaJ-bound protein, DnaK hydrolyzes its bound ATP, resulting in the formation of a stable complex. GrpE releases ADP from DnaK; ATP binding to DnaK triggers the release of the substrate protein, thus completing the reaction cycle. Several rounds of ATP-dependent interactions between DnaJ, DnaK and GrpE are required for fully efficient folding. Also involved, together with DnaK and GrpE, in the DNA replication of plasmids through activation of initiation proteins. The chain is Chaperone protein DnaJ from Thermoplasma volcanium (strain ATCC 51530 / DSM 4299 / JCM 9571 / NBRC 15438 / GSS1).